Here is a 177-residue protein sequence, read N- to C-terminus: 3-hydroxydecanoyl-[acyl-carrier-protein] dehydratase (177 aa).

His-76 is a catalytic residue.

This sequence belongs to the thioester dehydratase family. FabA subfamily. In terms of assembly, homodimer.

The protein resides in the cytoplasm. The enzyme catalyses a (3R)-hydroxyacyl-[ACP] = a (2E)-enoyl-[ACP] + H2O. It carries out the reaction (3R)-hydroxydecanoyl-[ACP] = (2E)-decenoyl-[ACP] + H2O. The catalysed reaction is (2E)-decenoyl-[ACP] = (3Z)-decenoyl-[ACP]. It functions in the pathway lipid metabolism; fatty acid biosynthesis. Necessary for the introduction of cis unsaturation into fatty acids. Catalyzes the dehydration of (3R)-3-hydroxydecanoyl-ACP to E-(2)-decenoyl-ACP and then its isomerization to Z-(3)-decenoyl-ACP. Can catalyze the dehydratase reaction for beta-hydroxyacyl-ACPs with saturated chain lengths up to 16:0, being most active on intermediate chain length. In Mannheimia succiniciproducens (strain KCTC 0769BP / MBEL55E), this protein is 3-hydroxydecanoyl-[acyl-carrier-protein] dehydratase.